A 455-amino-acid chain; its full sequence is 12S seed storage protein CRB (455 aa).

The first 24 residues, 1 to 24 (MGRVSSIISFSLTLLILFNGYTAQ), serve as a signal peptide directing secretion. Intrachain disulfides connect Cys30/Cys63 and Cys106/Cys276. Cupin type-1 domains follow at residues 35–229 (LNAL…ETAQ) and 282–431 (ENLD…EEAK). Thr109 bears the Phosphothreonine mark. Residue Tyr299 is modified to Phosphotyrosine. 2 positions are modified to phosphoserine: Ser301 and Ser367. Phosphothreonine is present on residues Thr395 and Thr420. Ser436 carries the phosphoserine modification.

It belongs to the 11S seed storage protein (globulins) family. As to quaternary structure, hexamer; each subunit is composed of an acidic and a basic chain derived from a single precursor and linked by a disulfide bond. In terms of processing, ubiquitinated. Post-translationally, proteolytically processed during seed maturation at a conserved Asn-Gly peptide bond by an asparaginyl endopeptidase to produce two mature polypeptides referred to as alpha and beta subunits that are joined together by a disulfide bond. Phosphorylated in seeds on some Tyr residues in response to abscisic acid (ABA). As to expression, accumulates in seeds 8 days after anthesis.

Its subcellular location is the protein storage vacuole. Functionally, seed storage protein. The chain is 12S seed storage protein CRB (CRB) from Arabidopsis thaliana (Mouse-ear cress).